Here is a 184-residue protein sequence, read N- to C-terminus: ADP-ribosylation factor-like protein 2 (184 aa).

Glycine 2 carries the N-myristoyl glycine lipid modification. GTP is bound by residues 23 to 30 (GLDNAGKT), 66 to 70 (DVGGQ), glycine 68, and 125 to 128 (NKSD).

It belongs to the small GTPase superfamily. Arf family. In terms of tissue distribution, in the embryo, strongly expressed in migrating hypodermal cells. Shortly before the beginning of elongation, expressed in many developing neurons where it persists throughout adulthood. In the larva, highly expressed in migrating hypodermal cells and the uterus. Also expressed in vulva, spermatheca, sheath cells, distal tips cells and proctoderm of the male tail.

The protein localises to the cytoplasm. It is found in the cell membrane. The protein resides in the cytoskeleton. Its subcellular location is the microtubule organizing center. It localises to the centrosome. Its function is as follows. GTP-binding protein that functions in embryogenesis, cytokinesis, germline development and microtubulule cytoskeleton dynamics. This is ADP-ribosylation factor-like protein 2 (evl-20) from Caenorhabditis elegans.